The following is a 248-amino-acid chain: 3-deoxy-manno-octulosonate cytidylyltransferase (248 aa).

This sequence belongs to the KdsB family.

It is found in the cytoplasm. It catalyses the reaction 3-deoxy-alpha-D-manno-oct-2-ulosonate + CTP = CMP-3-deoxy-beta-D-manno-octulosonate + diphosphate. Its pathway is nucleotide-sugar biosynthesis; CMP-3-deoxy-D-manno-octulosonate biosynthesis; CMP-3-deoxy-D-manno-octulosonate from 3-deoxy-D-manno-octulosonate and CTP: step 1/1. It participates in bacterial outer membrane biogenesis; lipopolysaccharide biosynthesis. Activates KDO (a required 8-carbon sugar) for incorporation into bacterial lipopolysaccharide in Gram-negative bacteria. The protein is 3-deoxy-manno-octulosonate cytidylyltransferase of Salmonella agona (strain SL483).